The chain runs to 320 residues: Acetyl-coenzyme A carboxylase carboxyl transferase subunit alpha (320 aa).

Residues 39–293 form the CoA carboxyltransferase C-terminal domain; sequence ALDAKAAKLL…RGAIAAMLKE (255 aa).

It belongs to the AccA family. As to quaternary structure, acetyl-CoA carboxylase is a heterohexamer composed of biotin carboxyl carrier protein (AccB), biotin carboxylase (AccC) and two subunits each of ACCase subunit alpha (AccA) and ACCase subunit beta (AccD).

It is found in the cytoplasm. The enzyme catalyses N(6)-carboxybiotinyl-L-lysyl-[protein] + acetyl-CoA = N(6)-biotinyl-L-lysyl-[protein] + malonyl-CoA. It functions in the pathway lipid metabolism; malonyl-CoA biosynthesis; malonyl-CoA from acetyl-CoA: step 1/1. Component of the acetyl coenzyme A carboxylase (ACC) complex. First, biotin carboxylase catalyzes the carboxylation of biotin on its carrier protein (BCCP) and then the CO(2) group is transferred by the carboxyltransferase to acetyl-CoA to form malonyl-CoA. The chain is Acetyl-coenzyme A carboxylase carboxyl transferase subunit alpha from Ruegeria pomeroyi (strain ATCC 700808 / DSM 15171 / DSS-3) (Silicibacter pomeroyi).